The chain runs to 270 residues: Interleukin-1 alpha (270 aa).

A propeptide spanning residues 1 to 114 (MAKVPDLFED…HDLEETIQPR (114 aa)) is cleaved from the precursor. Residue Asn-46 is glycosylated (N-linked (GlcNAc...) asparagine). Residue Lys-85 is modified to N6-acetyllysine. Residues 85-89 (KKRRL) are nuclear localization signal (NLS). Position 90 is a phosphoserine (Ser-90). A glycan (N-linked (GlcNAc...) asparagine) is linked at Asn-139.

Belongs to the IL-1 family. Monomer. Interacts with TMED10; the interaction mediates the translocation from the cytoplasm into the ERGIC (endoplasmic reticulum-Golgi intermediate compartment) and thereby secretion. Interacts with IL1R1. Interacts with S100A13; this interaction is the first step in the export of IL1A, followed by direct translocation of this complex across the plasma membrane. Post-translationally, acetylated within its nuclear localization sequence, which impacts subcellular localization. In terms of processing, proteolytic processed by CAPN1 in a calcium-dependent manner. Cleavage from 31 kDa precursor to 18 kDa biologically active molecules. Phosphorylated. Phosphorylation greatly enhances susceptibility to digestion and promotes the conversion of pre-IL1A alpha to the biologically active IL1A.

The protein resides in the nucleus. The protein localises to the cytoplasm. It is found in the secreted. Its function is as follows. Cytokine constitutively present intracellularly in nearly all resting non-hematopoietic cells that plays an important role in inflammation and bridges the innate and adaptive immune systems. After binding to its receptor IL1R1 together with its accessory protein IL1RAP, forms the high affinity interleukin-1 receptor complex. Signaling involves the recruitment of adapter molecules such as MYD88, IRAK1 or IRAK4. In turn, mediates the activation of NF-kappa-B and the three MAPK pathways p38, p42/p44 and JNK pathways. Within the cell, acts as an alarmin and cell death results in its liberation in the extracellular space after disruption of the cell membrane to induce inflammation and alert the host to injury or damage. In addition to its role as a danger signal, which occurs when the cytokine is passively released by cell necrosis, directly senses DNA damage and acts as signal for genotoxic stress without loss of cell integrity. The polypeptide is Interleukin-1 alpha (Rattus norvegicus (Rat)).